A 300-amino-acid polypeptide reads, in one-letter code: Formamidopyrimidine-DNA glycosylase (300 aa).

The active-site Schiff-base intermediate with DNA is the proline 2. Glutamate 3 (proton donor) is an active-site residue. Lysine 60 (proton donor; for beta-elimination activity) is an active-site residue. Histidine 108, arginine 136, and arginine 181 together coordinate DNA. The segment at 266-300 (WVYSRAGQPCRICNTPLEKIKLAGRSTHFCPQCQK) adopts an FPG-type zinc-finger fold. Arginine 290 acts as the Proton donor; for delta-elimination activity in catalysis.

It belongs to the FPG family. As to quaternary structure, monomer. The cofactor is Zn(2+).

It carries out the reaction Hydrolysis of DNA containing ring-opened 7-methylguanine residues, releasing 2,6-diamino-4-hydroxy-5-(N-methyl)formamidopyrimidine.. The catalysed reaction is 2'-deoxyribonucleotide-(2'-deoxyribose 5'-phosphate)-2'-deoxyribonucleotide-DNA = a 3'-end 2'-deoxyribonucleotide-(2,3-dehydro-2,3-deoxyribose 5'-phosphate)-DNA + a 5'-end 5'-phospho-2'-deoxyribonucleoside-DNA + H(+). In terms of biological role, involved in base excision repair of DNA damaged by oxidation or by mutagenic agents. Acts as a DNA glycosylase that recognizes and removes damaged bases. Has a preference for oxidized purines, such as 7,8-dihydro-8-oxoguanine (8-oxoG). Has AP (apurinic/apyrimidinic) lyase activity and introduces nicks in the DNA strand. Cleaves the DNA backbone by beta-delta elimination to generate a single-strand break at the site of the removed base with both 3'- and 5'-phosphates. This Trichodesmium erythraeum (strain IMS101) protein is Formamidopyrimidine-DNA glycosylase.